We begin with the raw amino-acid sequence, 1451 residues long: DNA excision repair protein ERCC-6-like (1451 aa).

One copy of the TPR 1 repeat lies at 27-60 (YDRYRQKGKEAALNGELPRALELFQLAYQLQPSE). In terms of domain architecture, Helicase ATP-binding spans 118 to 286 (SLYRDGRKGG…WALFDFACQG (169 aa)). 131–138 (DDMGLGKT) is an ATP binding site. The DEAH box motif lies at 237–240 (DEAH). The region spanning 479-639 (FVVSLMECLR…PFRYFSKQEL (161 aa)) is the Helicase C-terminal domain. 7 disordered regions span residues 647-669 (DTRS…RSDT), 778-804 (NSFD…ETAS), 935-1006 (DDTS…ATTD), 1035-1054 (DEEV…EFQL), 1063-1083 (LEEP…NYND), 1096-1140 (RSTP…LTSS), and 1182-1343 (LLEN…SAEL). Residues 781 to 804 (DEPEFEEDEQNLPSAEDAEMETAS) show a composition bias toward acidic residues. Polar residues-rich tracts occupy residues 944–964 (SDFN…SPSL) and 992–1002 (QVLSSPLSQHE). S961 is modified (phosphoserine). Residues 1035 to 1050 (DEEVHEVEESAAEESP) show a composition bias toward acidic residues. Basic and acidic residues predominate over residues 1063–1074 (LEEPSINHDKQN). The span at 1121 to 1132 (DTEEEEEEEEES) shows a compositional bias: acidic residues. The span at 1213–1230 (VQTSSGDNSKSYETSEAN) shows a compositional bias: polar residues. Residues 1244–1278 (YREGKNTSDKVSESNETHSEEFAEEEKPSGDKSES) show a composition bias toward basic and acidic residues. Positions 1310 to 1341 (SEADESVVEEEEPSGETLNTEESEMGEEEESA) are enriched in acidic residues. Residues 1402 to 1435 (YNLLVLSGKQSLAEGRKQEALDFFLKAIDINTGD) form a TPR 2 repeat.

This sequence belongs to the SNF2/RAD54 helicase family.

The protein resides in the chromosome. Its subcellular location is the centromere. It localises to the kinetochore. It carries out the reaction ATP + H2O = ADP + phosphate + H(+). DNA helicase that acts as a tension sensor that associates with catenated DNA which is stretched under tension until it is resolved during anaphase. Functions as ATP-dependent DNA translocase. Can promote Holliday junction branch migration (in vitro). This Danio rerio (Zebrafish) protein is DNA excision repair protein ERCC-6-like (ercc6l).